We begin with the raw amino-acid sequence, 271 residues long: MPELPEVETVRRGIEPHLVGRQIHTVIVRESRLRWPIPLSLTQNLIGQSFLAVGRRGKYLLLSCTQGTIILHLGMSGSLRLVTTNTPHGKHDHLDIVLNNGRCLRFNDPRRFGSVSWTQANPLHHPLLEILGPEPLESLFDGHYLFKHSRHRRTSVKAFIMNHRIVAGVGNIYANEALFLAGIHPRRSASRIGLARYQRLAETTKTVLYNAIQAGGTTLRNFLTSDGKPGYFANQLQIYGRSAHPCPICGTPIRLERIGQRASYYCTQCQH.

Proline 2 functions as the Schiff-base intermediate with DNA in the catalytic mechanism. The active-site Proton donor is glutamate 3. The active-site Proton donor; for beta-elimination activity is lysine 58. Residues histidine 91, arginine 110, and arginine 152 each coordinate DNA. An FPG-type zinc finger spans residues 237–271 (QIYGRSAHPCPICGTPIRLERIGQRASYYCTQCQH). Arginine 261 functions as the Proton donor; for delta-elimination activity in the catalytic mechanism.

It belongs to the FPG family. In terms of assembly, monomer. Requires Zn(2+) as cofactor.

The catalysed reaction is Hydrolysis of DNA containing ring-opened 7-methylguanine residues, releasing 2,6-diamino-4-hydroxy-5-(N-methyl)formamidopyrimidine.. It carries out the reaction 2'-deoxyribonucleotide-(2'-deoxyribose 5'-phosphate)-2'-deoxyribonucleotide-DNA = a 3'-end 2'-deoxyribonucleotide-(2,3-dehydro-2,3-deoxyribose 5'-phosphate)-DNA + a 5'-end 5'-phospho-2'-deoxyribonucleoside-DNA + H(+). Involved in base excision repair of DNA damaged by oxidation or by mutagenic agents. Acts as a DNA glycosylase that recognizes and removes damaged bases. Has a preference for oxidized purines, such as 7,8-dihydro-8-oxoguanine (8-oxoG). Has AP (apurinic/apyrimidinic) lyase activity and introduces nicks in the DNA strand. Cleaves the DNA backbone by beta-delta elimination to generate a single-strand break at the site of the removed base with both 3'- and 5'-phosphates. The chain is Formamidopyrimidine-DNA glycosylase from Nitrosococcus oceani (strain ATCC 19707 / BCRC 17464 / JCM 30415 / NCIMB 11848 / C-107).